A 219-amino-acid chain; its full sequence is Mucosal pentraxin (219 aa).

The signal sequence occupies residues Met1–Ala19. Residues Lys24–Pro219 form the Pentraxin (PTX) domain. N-linked (GlcNAc...) asparagine glycosylation is present at Asn51. A disulfide bridge links Cys55 with Cys114. Residues Asp77, Asn78, Glu155, Gln156, Asp157, and Gln167 each contribute to the Ca(2+) site.

Belongs to the pentraxin family. Homopentamer. Pentraxin (or pentaxin) have a discoid arrangement of 5 non-covalently bound subunits. Ca(2+) serves as cofactor. In terms of tissue distribution, expressed in colon.

Its subcellular location is the secreted. The chain is Mucosal pentraxin (Mptx1) from Mus musculus (Mouse).